The following is a 149-amino-acid chain: Cytochrome c' (149 aa).

Residues 1–19 form the signal peptide; the sequence is MRRVLLATLMAALPAAAMA. Heme c contacts are provided by R29, T89, A90, C138, C141, and H142.

Monomer and homodimer. Binds 1 heme c group covalently per subunit.

Cytochrome c' is the most widely occurring bacterial c-type cytochrome. Cytochromes c' are high-spin proteins and the heme has no sixth ligand. Their exact function is not known. This Cereibacter sphaeroides (strain ATCC 17023 / DSM 158 / JCM 6121 / CCUG 31486 / LMG 2827 / NBRC 12203 / NCIMB 8253 / ATH 2.4.1.) (Rhodobacter sphaeroides) protein is Cytochrome c' (cycP).